Consider the following 311-residue polypeptide: N-acetylmuramic acid 6-phosphate etherase (311 aa).

The 164-residue stretch at 66–229 (VAVRMARGGR…STITMIRLGK (164 aa)) folds into the SIS domain. The active-site Proton donor is the Glu-94. Glu-125 is an active-site residue.

This sequence belongs to the GCKR-like family. MurNAc-6-P etherase subfamily. As to quaternary structure, homodimer.

The enzyme catalyses N-acetyl-D-muramate 6-phosphate + H2O = N-acetyl-D-glucosamine 6-phosphate + (R)-lactate. The protein operates within amino-sugar metabolism; N-acetylmuramate degradation. Its function is as follows. Specifically catalyzes the cleavage of the D-lactyl ether substituent of MurNAc 6-phosphate, producing GlcNAc 6-phosphate and D-lactate. The protein is N-acetylmuramic acid 6-phosphate etherase of Streptomyces coelicolor (strain ATCC BAA-471 / A3(2) / M145).